The chain runs to 212 residues: Ribosomal RNA small subunit methyltransferase G (212 aa).

S-adenosyl-L-methionine contacts are provided by residues Gly-75, Leu-80, 126-127 (AQ), and Arg-141.

It belongs to the methyltransferase superfamily. RNA methyltransferase RsmG family.

It is found in the cytoplasm. Specifically methylates the N7 position of guanine in position 518 of 16S rRNA. The protein is Ribosomal RNA small subunit methyltransferase G of Beutenbergia cavernae (strain ATCC BAA-8 / DSM 12333 / CCUG 43141 / JCM 11478 / NBRC 16432 / NCIMB 13614 / HKI 0122).